The following is a 160-amino-acid chain: Phosphopantetheine adenylyltransferase (160 aa).

Ser10 is a binding site for substrate. ATP contacts are provided by residues 10 to 11 and His18; that span reads SF. Residues Lys42, Leu74, and Arg88 each coordinate substrate. ATP contacts are provided by residues 89-91, Glu99, and 124-130; these read GLR and YSFLSSS.

This sequence belongs to the bacterial CoaD family. Homohexamer. Mg(2+) serves as cofactor.

Its subcellular location is the cytoplasm. The enzyme catalyses (R)-4'-phosphopantetheine + ATP + H(+) = 3'-dephospho-CoA + diphosphate. The protein operates within cofactor biosynthesis; coenzyme A biosynthesis; CoA from (R)-pantothenate: step 4/5. Its function is as follows. Reversibly transfers an adenylyl group from ATP to 4'-phosphopantetheine, yielding dephospho-CoA (dPCoA) and pyrophosphate. The protein is Phosphopantetheine adenylyltransferase of Bacillus pumilus (strain SAFR-032).